A 78-amino-acid polypeptide reads, in one-letter code: Large ribosomal subunit protein bL28 (78 aa).

Belongs to the bacterial ribosomal protein bL28 family.

In Rippkaea orientalis (strain PCC 8801 / RF-1) (Cyanothece sp. (strain PCC 8801)), this protein is Large ribosomal subunit protein bL28.